The chain runs to 275 residues: MQTIDSSSSAATTETLQIGHRQFQSRLMTGTGKYDDFETMRRSIAASGCEIVTVAVRRVQTNAPGHQGLAEAVDWNKVWMLPNTAGCQTAEEAVRVARLGREMAKLLGQEDNNFIKLEVIPDSKYLLPDPIGTLEAAEQLVKEGFAVLPYINADPLLAKRLEEVGCATVMPLGSPIGSGQGIKNMANIQIIIENATVPVVVDAGIGSPSEAAQAMEMGADAVLINTAIAKAQDPVMMATAMGMATQAGRFAYQSGRIPVKAYASASSPLAGRISS.

Lys116 serves as the catalytic Schiff-base intermediate with DXP. 1-deoxy-D-xylulose 5-phosphate is bound by residues Gly177, 203–204 (AG), and 225–226 (NT).

This sequence belongs to the ThiG family. Homotetramer. Forms heterodimers with either ThiH or ThiS.

The protein resides in the cytoplasm. It carries out the reaction [ThiS sulfur-carrier protein]-C-terminal-Gly-aminoethanethioate + 2-iminoacetate + 1-deoxy-D-xylulose 5-phosphate = [ThiS sulfur-carrier protein]-C-terminal Gly-Gly + 2-[(2R,5Z)-2-carboxy-4-methylthiazol-5(2H)-ylidene]ethyl phosphate + 2 H2O + H(+). Its pathway is cofactor biosynthesis; thiamine diphosphate biosynthesis. Functionally, catalyzes the rearrangement of 1-deoxy-D-xylulose 5-phosphate (DXP) to produce the thiazole phosphate moiety of thiamine. Sulfur is provided by the thiocarboxylate moiety of the carrier protein ThiS. In vitro, sulfur can be provided by H(2)S. The sequence is that of Thiazole synthase from Acaryochloris marina (strain MBIC 11017).